Reading from the N-terminus, the 694-residue chain is Glycine--tRNA ligase beta subunit (694 aa).

This sequence belongs to the class-II aminoacyl-tRNA synthetase family. In terms of assembly, tetramer of two alpha and two beta subunits.

It localises to the cytoplasm. The enzyme catalyses tRNA(Gly) + glycine + ATP = glycyl-tRNA(Gly) + AMP + diphosphate. The protein is Glycine--tRNA ligase beta subunit of Moorella thermoacetica (strain ATCC 39073 / JCM 9320).